The following is a 212-amino-acid chain: Thymidylate kinase (212 aa).

10-17 is a binding site for ATP; sequence GLEGAGKT.

The protein belongs to the thymidylate kinase family.

It carries out the reaction dTMP + ATP = dTDP + ADP. Phosphorylation of dTMP to form dTDP in both de novo and salvage pathways of dTTP synthesis. This is Thymidylate kinase from Baumannia cicadellinicola subsp. Homalodisca coagulata.